The chain runs to 95 residues: Defensin-1 (95 aa).

Residues 1 to 19 (MKIYFIVGLLFMAMVAIMA) form the signal peptide. A propeptide spanning residues 20 to 43 (APVEDEFEPLEHFENEERADRHRR) is cleaved from the precursor. Disulfide bonds link Cys-46–Cys-74, Cys-60–Cys-79, and Cys-64–Cys-81. Position 94 is a phenylalanine amide (Phe-94).

It is found in the secreted. Functionally, found in royal jelly and in hemolymph, potent antibacterial protein against Gram-positive bacteria at low concentration. The chain is Defensin-1 from Apis mellifera carnica (Carniolan honeybee).